We begin with the raw amino-acid sequence, 444 residues long: E3 ubiquitin-protein ligase RNFT2 (444 aa).

Topologically, residues 1–181 (MWLFTVNQVL…ILLAKLCFQH (181 aa)) are extracellular. Disordered stretches follow at residues 13 to 41 (MQRR…ASVD) and 92 to 149 (PASR…PGTP). Basic residues predominate over residues 107-121 (YHHRQPHHHFHHGGH). Over residues 131–140 (GGDHRGHSEE) the composition is skewed to basic and acidic residues. Residues 182–202 (KLGIAVCIGMASTFAYANSTL) form a helical membrane-spanning segment. Topologically, residues 203-214 (REQVSLKEKRSV) are cytoplasmic. Residues 215 to 235 (LVILWILAFLAGNTLYVLYTF) form a helical membrane-spanning segment. Over 236-255 (SSQQLYNSLIFLKPNLEMLD) the chain is Extracellular. The chain crosses the membrane as a helical span at residues 256 to 276 (FFDLLWIVGIADFVLKYITIA). At 277 to 329 (LKCLIVALPKIILAVKSKGKFYLVIEELSQLFRSLVPIQLWYKYIMGDDSSNS) the chain is on the cytoplasmic side. The helical transmembrane segment at 330–350 (YFLGGVLIVLYSLCKSFDICG) threads the bilayer. At 351–444 (RVGGVRKALK…GATSAHFQVY (94 aa)) the chain is on the extracellular side. The RING-type zinc-finger motif lies at 384–422 (CAICQAEFREPLILLCQHVFCEECLCLWLDRERTCPLCR).

It is found in the membrane. Functionally, E3 ubiquitin-protein ligase that negatively regulates IL3-dependent cellular responses through IL3RA ubiquitination and degradation by the proteasome, having an anti-inflammatory effect. The polypeptide is E3 ubiquitin-protein ligase RNFT2 (Homo sapiens (Human)).